The primary structure comprises 361 residues: Holliday junction branch migration complex subunit RuvB (361 aa).

The segment at 1–181 (MKDQRLLDSV…FGIPIRLNFY (181 aa)) is large ATPase domain (RuvB-L). ATP-binding positions include L20, R21, G62, K65, T66, T67, 128-130 (EDY), R171, Y181, and R218. T66 is a Mg(2+) binding site. Residues 182 to 252 (TIEELEYIVQ…VADEALSRLE (71 aa)) are small ATPAse domain (RuvB-S). The tract at residues 255 to 361 (HLGLDPLDRR…QTTLWDEADE (107 aa)) is head domain (RuvB-H). Residues R291, R310, and R315 each contribute to the DNA site.

Belongs to the RuvB family. In terms of assembly, homohexamer. Forms an RuvA(8)-RuvB(12)-Holliday junction (HJ) complex. HJ DNA is sandwiched between 2 RuvA tetramers; dsDNA enters through RuvA and exits via RuvB. An RuvB hexamer assembles on each DNA strand where it exits the tetramer. Each RuvB hexamer is contacted by two RuvA subunits (via domain III) on 2 adjacent RuvB subunits; this complex drives branch migration. In the full resolvosome a probable DNA-RuvA(4)-RuvB(12)-RuvC(2) complex forms which resolves the HJ.

The protein resides in the cytoplasm. It carries out the reaction ATP + H2O = ADP + phosphate + H(+). Functionally, the RuvA-RuvB-RuvC complex processes Holliday junction (HJ) DNA during genetic recombination and DNA repair, while the RuvA-RuvB complex plays an important role in the rescue of blocked DNA replication forks via replication fork reversal (RFR). RuvA specifically binds to HJ cruciform DNA, conferring on it an open structure. The RuvB hexamer acts as an ATP-dependent pump, pulling dsDNA into and through the RuvAB complex. RuvB forms 2 homohexamers on either side of HJ DNA bound by 1 or 2 RuvA tetramers; 4 subunits per hexamer contact DNA at a time. Coordinated motions by a converter formed by DNA-disengaged RuvB subunits stimulates ATP hydrolysis and nucleotide exchange. Immobilization of the converter enables RuvB to convert the ATP-contained energy into a lever motion, pulling 2 nucleotides of DNA out of the RuvA tetramer per ATP hydrolyzed, thus driving DNA branch migration. The RuvB motors rotate together with the DNA substrate, which together with the progressing nucleotide cycle form the mechanistic basis for DNA recombination by continuous HJ branch migration. Branch migration allows RuvC to scan DNA until it finds its consensus sequence, where it cleaves and resolves cruciform DNA. The protein is Holliday junction branch migration complex subunit RuvB of Bartonella quintana (strain Toulouse) (Rochalimaea quintana).